The primary structure comprises 315 residues: L-lactate dehydrogenase (315 aa).

NAD(+)-binding positions include Val17, Asp38, Lys43, Tyr69, and 83–84; that span reads GA. Residues Gln86, Arg92, and 124-127 each bind substrate; that span reads NPVD. Residues 122-124 and Ser147 contribute to the NAD(+) site; that span reads ATN. 152–155 serves as a coordination point for substrate; the sequence is DTAR. 2 residues coordinate beta-D-fructose 1,6-bisphosphate: Arg157 and His172. His179 serves as the catalytic Proton acceptor. Tyr224 is modified (phosphotyrosine). Thr233 lines the substrate pocket.

The protein belongs to the LDH/MDH superfamily. LDH family. In terms of assembly, homotetramer.

It localises to the cytoplasm. The enzyme catalyses (S)-lactate + NAD(+) = pyruvate + NADH + H(+). It functions in the pathway fermentation; pyruvate fermentation to lactate; (S)-lactate from pyruvate: step 1/1. Its activity is regulated as follows. Allosterically activated by fructose 1,6-bisphosphate (FBP). Its function is as follows. Catalyzes the conversion of lactate to pyruvate. This Bacillus pumilus (strain SAFR-032) protein is L-lactate dehydrogenase.